A 491-amino-acid polypeptide reads, in one-letter code: Probable glycine dehydrogenase (decarboxylating) subunit 2 (491 aa).

An N6-(pyridoxal phosphate)lysine modification is found at K264.

The protein belongs to the GcvP family. C-terminal subunit subfamily. In terms of assembly, the glycine cleavage system is composed of four proteins: P, T, L and H. In this organism, the P 'protein' is a heterodimer of two subunits. Pyridoxal 5'-phosphate serves as cofactor.

The catalysed reaction is N(6)-[(R)-lipoyl]-L-lysyl-[glycine-cleavage complex H protein] + glycine + H(+) = N(6)-[(R)-S(8)-aminomethyldihydrolipoyl]-L-lysyl-[glycine-cleavage complex H protein] + CO2. Functionally, the glycine cleavage system catalyzes the degradation of glycine. The P protein binds the alpha-amino group of glycine through its pyridoxal phosphate cofactor; CO(2) is released and the remaining methylamine moiety is then transferred to the lipoamide cofactor of the H protein. This chain is Probable glycine dehydrogenase (decarboxylating) subunit 2, found in Coxiella burnetii (strain CbuK_Q154) (Coxiella burnetii (strain Q154)).